The primary structure comprises 640 residues: MKITFPDGAVKEFEPGVSTADIAASISPGLKKKALAGKLNGELLDLVTPIHEDGAIEIVTPDHEDALGILRHSTAHLMAQALKRLYPDVKFGVGPAIESGFYYDIDTEAVISDESLVEIEKEMQKIVRENVPIEREVVSREEAIKRFKAIGDQYKLELIEAIPKDETVTIYTQGEFFDLCRGVHVPSTGKIQVFKLLSVAGAYWRGDSNNKMLQRIYGTAFFDKNGLKEFIQMQKEAKERDHRKLGKELELFTNSIEVGQGLPLWLPKGATIRRVIERYIVDKEERLGYNHVYTPIMANVELYKTSGHWDHYHEDMFPTMKMDNEELVLRPMNCPHHMMIYKNDIHSYRELPIRIAELGMMHRYEMSGALSGLQRVRGMTLNDAHVFVRPDQIKDEFKRVVELILEVYKDFDIKDYSFRLSYRDPKNTEKYFDDDAMWEKAQAMLKSAMDEMGMDYFEAEGEAAFYGPKLDVQVKTAIGKEETLSTVQLDFLLPERFDLTYIGEDGEKHRPVVIHRGVVSTMERFVAYLIEEYKGAFPTWLAPVQMELIPVNADAHLDYSKGVQDKLQRAGLRSEVDDRNEKLGYKIREAQTKKIPYALVLGDQEMEAGSVNVRRYGSKDSETMDLDAFIAQVVAEVSKY.

One can recognise a TGS domain in the interval 1-60 (MKITFPDGAVKEFEPGVSTADIAASISPGLKKKALAGKLNGELLDLVTPIHEDGAIEIVT). The interval 241 to 538 (DHRKLGKELE…LIEEYKGAFP (298 aa)) is catalytic. Zn(2+) is bound by residues cysteine 334, histidine 385, and histidine 515.

It belongs to the class-II aminoacyl-tRNA synthetase family. In terms of assembly, homodimer. It depends on Zn(2+) as a cofactor.

It localises to the cytoplasm. It catalyses the reaction tRNA(Thr) + L-threonine + ATP = L-threonyl-tRNA(Thr) + AMP + diphosphate + H(+). In terms of biological role, catalyzes the attachment of threonine to tRNA(Thr) in a two-step reaction: L-threonine is first activated by ATP to form Thr-AMP and then transferred to the acceptor end of tRNA(Thr). Also edits incorrectly charged L-seryl-tRNA(Thr). The protein is Threonine--tRNA ligase of Listeria welshimeri serovar 6b (strain ATCC 35897 / DSM 20650 / CCUG 15529 / CIP 8149 / NCTC 11857 / SLCC 5334 / V8).